The chain runs to 553 residues: HTH-type transcriptional regulator SgrR (553 aa).

The HTH marR-type domain maps to 1–113 (MSTSRLQQQF…RQMLLSQLGR (113 aa)). The segment at residues 26–49 (LQALAEVLNCSRRHVRSLLGKMQH) is a DNA-binding region (H-T-H motif). The solute-binding stretch occupies residues 163–494 (ELEPDLSHHW…EELHQDIESW (332 aa)).

In terms of biological role, activates the small RNA gene sgrS under glucose-phosphate stress conditions as well as yfdZ. Represses its own transcription under both stress and non-stress conditions. Might act as a sensor of the intracellular accumulation of phosphoglucose by binding these molecules in its C-terminal solute-binding domain. This Yersinia pestis bv. Antiqua (strain Antiqua) protein is HTH-type transcriptional regulator SgrR.